The primary structure comprises 535 residues: MATCFWLRSCGARRLGSTFPGCRLRPRAGGLVPASGPAPGPAQLRCYAGGLAGLSAALLRTDSFVGGRWLPAAATFPVQDPASGAALGMVADCGVREARAAVRAAYEAFCSWREVSAKERSSLLRKWYNLMIQNKDDLARIITAESGKPLKEAHGEILYSAFFLEWFSEEARRVYGDIIYTPAKDRRALVLKQPIGVAAVITPWNFPSAMITRKVGAALAAGCTVVVKPAEDTPFSALALAELASQAGIPSGVYNVIPCSRKNAKEVGEAICTDPLVSKISFTGSTTTGKILLHHAANSVKRVSMELGGLAPFIVFDSANVDQAVAGALASKFRNTGQTCVCSNRFLVQRGIHDAFVKAFAEAMKKNLHVGNGFEEGTTQGPLINEKAVEKVEKQVNDAVSKGATIVTGGKRHQLGKNFFEPTLLCNVTQDMLCTHEETFGPLAPVIKFDTEEEAIAIANAADVGLAGYFYSQDPAQIWRVAEQLEVGMVGVNEGLISSVECPFGGVKQSGLGREGSKYGIDEYLELKYVCYGGL.

The N-terminal 47 residues, 1-47 (MATCFWLRSCGARRLGSTFPGCRLRPRAGGLVPASGPAPGPAQLRCY), are a transit peptide targeting the mitochondrion. N6-acetyllysine; alternate is present on lysine 126. Lysine 126 bears the N6-succinyllysine; alternate mark. Lysine 135 and lysine 184 each carry N6-succinyllysine. Residues arginine 213 and 228-231 (KPAE) each bind NAD(+). A substrate-binding site is contributed by arginine 213. The residue at position 265 (lysine 265) is an N6-acetyllysine; alternate. Lysine 265 bears the N6-succinyllysine; alternate mark. 284-289 (GSTTTG) contacts NAD(+). The Proton acceptor role is filled by glutamate 306. Position 334 (arginine 334) interacts with substrate. Catalysis depends on cysteine 340, which acts as the Nucleophile. A disulfide bridge links cysteine 340 with cysteine 342. The residue at position 365 (lysine 365) is an N6-acetyllysine. Lysine 402 is subject to N6-succinyllysine. Residue lysine 411 is modified to N6-acetyllysine. A substrate-binding site is contributed by serine 498. Serine 499 is subject to Phosphoserine.

Belongs to the aldehyde dehydrogenase family. In terms of assembly, homotetramer.

It is found in the mitochondrion. It catalyses the reaction succinate semialdehyde + NAD(+) + H2O = succinate + NADH + 2 H(+). It functions in the pathway amino-acid degradation; 4-aminobutanoate degradation. Redox-regulated. Inhibited under oxydizing conditions. Catalyzes one step in the degradation of the inhibitory neurotransmitter gamma-aminobutyric acid (GABA). This chain is Succinate-semialdehyde dehydrogenase, mitochondrial (ALDH5A1), found in Hylobates lar (Lar gibbon).